The sequence spans 270 residues: Aliphatic sulfonates import ATP-binding protein SsuB (270 aa).

Residues 17-238 enclose the ABC transporter domain; the sequence is LAANDLRRTF…VRGSHRLAAL (222 aa). 49 to 56 contributes to the ATP binding site; the sequence is GRSGCGKS. The tract at residues 250–270 is disordered; it reads PGTPPEPEPVAPLPTHLRWAH. Positions 251-261 are enriched in pro residues; it reads GTPPEPEPVAP.

It belongs to the ABC transporter superfamily. Aliphatic sulfonates importer (TC 3.A.1.17.2) family. In terms of assembly, the complex is composed of two ATP-binding proteins (SsuB), two transmembrane proteins (SsuC) and a solute-binding protein (SsuA).

The protein resides in the cell inner membrane. The enzyme catalyses ATP + H2O + aliphatic sulfonate-[sulfonate-binding protein]Side 1 = ADP + phosphate + aliphatic sulfonateSide 2 + [sulfonate-binding protein]Side 1.. In terms of biological role, part of the ABC transporter complex SsuABC involved in aliphatic sulfonates import. Responsible for energy coupling to the transport system. In Pseudomonas entomophila (strain L48), this protein is Aliphatic sulfonates import ATP-binding protein SsuB.